A 110-amino-acid chain; its full sequence is MVNLFPVFTLIVIITILITTRELSTTMLIVSLVTDYIIINTQYTEQHEMNKFSAQQGLQKNSFDESYNKDKKPNTHISYQWLAPELKEAENKYWWGNDDPYSQPVLAGAS.

Residues 10 to 32 traverse the membrane as a helical segment; it reads LIVIITILITTRELSTTMLIVSL.

This sequence belongs to the asfivirus H108R family.

Its subcellular location is the virion membrane. The protein is Inner membrane protein H108R of African swine fever virus (isolate Pig/Kenya/KEN-50/1950) (ASFV).